The primary structure comprises 131 residues: Translation initiation factor 5A (131 aa).

Hypusine is present on Lys-36.

This sequence belongs to the eIF-5A family. The N-terminus is blocked.

Its subcellular location is the cytoplasm. Functionally, functions by promoting the formation of the first peptide bond. This Sulfolobus acidocaldarius (strain ATCC 33909 / DSM 639 / JCM 8929 / NBRC 15157 / NCIMB 11770) protein is Translation initiation factor 5A (eif5a).